Here is a 958-residue protein sequence, read N- to C-terminus: Glycine dehydrogenase (decarboxylating) (958 aa).

At K708 the chain carries N6-(pyridoxal phosphate)lysine.

Belongs to the GcvP family. The glycine cleavage system is composed of four proteins: P, T, L and H. Pyridoxal 5'-phosphate serves as cofactor.

The catalysed reaction is N(6)-[(R)-lipoyl]-L-lysyl-[glycine-cleavage complex H protein] + glycine + H(+) = N(6)-[(R)-S(8)-aminomethyldihydrolipoyl]-L-lysyl-[glycine-cleavage complex H protein] + CO2. In terms of biological role, the glycine cleavage system catalyzes the degradation of glycine. The P protein binds the alpha-amino group of glycine through its pyridoxal phosphate cofactor; CO(2) is released and the remaining methylamine moiety is then transferred to the lipoamide cofactor of the H protein. This is Glycine dehydrogenase (decarboxylating) from Photorhabdus laumondii subsp. laumondii (strain DSM 15139 / CIP 105565 / TT01) (Photorhabdus luminescens subsp. laumondii).